The primary structure comprises 214 residues: SH3 domain-binding glutamic acid-rich protein (214 aa).

The short motif at 61-67 (NGIPLPP) is the SH3-binding element. Residues 101–214 (PGSKVTKSEE…EEEAGEGEDS (114 aa)) form a disordered region. Positions 129 to 144 (GTEKAEKSGENEAQKE) are enriched in basic and acidic residues. Composition is skewed to acidic residues over residues 162 to 192 (EGEDGEEGEEGEEREEGGEGETTGETEEAPE) and 198 to 214 (EAEEEEPEEEAGEGEDS).

This sequence belongs to the SH3BGR family.

This is SH3 domain-binding glutamic acid-rich protein (Sh3bgr) from Mus musculus (Mouse).